Here is an 883-residue protein sequence, read N- to C-terminus: MSNKQKIPCFVLIYEQVDIIKKCLSFLIKYSDRLNIIIVENYSSNTQTIIKPYVIDLINNKLIWKYYLFEKNIYNVAIHISINHAIKTYLDPNEYPYVYVTDGDLTIEDSNWIDEQLSILDKCPNAFVCGCLLDYSNLPIETIPDSVGWIQKYTDRGDYNVGITGTVFNSYRTPVLIEAMKYLNDNGLKYLDYHLHHYHHEIKNMIWTCTKKAKSYHLTWDLYADPENPYTIYKLRNYKTMWFNNTEASYQLFEHDDINNQSDNQSNSELDNRPNIEPNGQSNSEPSNQPNNEPNYQSNSEPSNQPNSEPNDQSNSELDNQSINEPNTEPNTESNGQSNSELNNQSDNHPNNEPNSEPNNEPNNQFNKPDNEPDDKIILKVVSTGFGKGTEKSGLYFQDQFYPGTRGFNIYTITQNKSITFQNYDSSGKQCIGELVRYIKTFYDTDHEYLIVLVDDDATRSININFMNEVVELYDLNKMYMLRVRSSYYFVYNLKQKKLIDENASDFITVKNSYNRKDLDLLSETQTTTINPTTINPKTNNINNPTNYVNVDESIEINNLNDINGLELDGLKTVKIMSEDNSDLEFSENEIEEPIEPIKYHIVCRESIYHYFKDYVESFIDKLNSDQSNNPKEKSTANSIISNQIHIYNYIDSPNHVYIFCQCIDDHLFKKSFNKMVIFTEQLTKKQELNQISRYVNHKIPVIHYSIENMKINNNPTDIYIPYQYNKKEIKVLRNLYLNTPKEYDVAFCGSMSPRRRKIIDDIKSNGLKVLELVRGYWGNIRDCSIAKCKVLVNVHYSHDYNVYEPMRCDRWAFATMPIVSEDSIYDELLDVKKYGLVTFCPYDELVTKIIQTLKGANKHNLSAIKIIKHSRKKKFYQTLQHL.

The tract at residues 258-373 (INNQSDNQSN…NQFNKPDNEP (116 aa)) is disordered. 3 stretches are compositionally biased toward low complexity: residues 259-268 (NNQSDNQSNS), 277-317 (EPNG…SNSE), and 324-333 (NEPNTEPNTE). Over residues 334–347 (SNGQSNSELNNQSD) the composition is skewed to polar residues. A compositionally biased stretch (low complexity) spans 348–368 (NHPNNEPNSEPNNEPNNQFNK).

Belongs to the mimivirus L137 family.

This is an uncharacterized protein from Acanthamoeba polyphaga mimivirus (APMV).